A 166-amino-acid polypeptide reads, in one-letter code: Endoribonuclease YbeY (166 aa).

Residues His132, His136, and His142 each contribute to the Zn(2+) site.

The protein belongs to the endoribonuclease YbeY family. The cofactor is Zn(2+).

It is found in the cytoplasm. Single strand-specific metallo-endoribonuclease involved in late-stage 70S ribosome quality control and in maturation of the 3' terminus of the 16S rRNA. The sequence is that of Endoribonuclease YbeY from Clostridium botulinum (strain Eklund 17B / Type B).